A 138-amino-acid chain; its full sequence is Basic phospholipase A2 homolog CTs-K49a (138 aa).

The signal sequence occupies residues 1–16; it reads MRTLWIMAVLLVVVEG. Intrachain disulfides connect Cys42-Cys131, Cys44-Cys60, Cys59-Cys111, Cys65-Cys138, Cys66-Cys104, and Cys91-Cys102. Residues 121–133 form an important for membrane-damaging activities in eukaryotes and bacteria; heparin-binding region; the sequence is KKKKINLKLFCKK.

The protein belongs to the phospholipase A2 family. Group II subfamily. K49 sub-subfamily. As to expression, expressed by the venom gland.

Its subcellular location is the secreted. Functionally, snake venom phospholipase A2 homolog that lacks catalytic activity. It shows myotoxic and weak anticoagulant activities. A model of myotoxic mechanism has been proposed: an apo Lys49-PLA2 is activated by the entrance of a hydrophobic molecule (e.g. fatty acid) at the hydrophobic channel of the protein leading to a reorientation of a monomer. This reorientation causes a transition between 'inactive' to 'active' states, causing alignment of C-terminal and membrane-docking sites (MDoS) side-by-side and putting the membrane-disruption sites (MDiS) in the same plane, exposed to solvent and in a symmetric position for both monomers. The MDoS region stabilizes the toxin on membrane by the interaction of charged residues with phospholipid head groups. Subsequently, the MDiS region destabilizes the membrane with penetration of hydrophobic residues. This insertion causes a disorganization of the membrane, allowing an uncontrolled influx of ions (i.e. calcium and sodium), and eventually triggering irreversible intracellular alterations and cell death. The chain is Basic phospholipase A2 homolog CTs-K49a from Trimeresurus stejnegeri (Chinese green tree viper).